A 1422-amino-acid polypeptide reads, in one-letter code: YEATS domain-containing protein 2 (1422 aa).

Lys9 is covalently cross-linked (Glycyl lysine isopeptide (Lys-Gly) (interchain with G-Cter in SUMO2)). A coiled-coil region spans residues 47 to 80 (KEQFALEMKNKEHEIEVIDQRLIEARRMMDKLRA). Lys113 participates in a covalent cross-link: Glycyl lysine isopeptide (Lys-Gly) (interchain with G-Cter in SUMO2). Positions 117–198 (ESPSRSSSPA…KTEQRNADLT (82 aa)) are disordered. Ser118, Ser120, and Ser157 each carry phosphoserine. The segment covering 119-148 (PSRSSSPANQRAETPSANHSESDSLSQHND) has biased composition (polar residues). The span at 149–165 (FLSDKDNNSNMDIEERL) shows a compositional bias: basic and acidic residues. Residues 166-176 (SNNMEQRPSRN) show a composition bias toward polar residues. Positions 177 to 198 (TGRDTSRITGSHKTEQRNADLT) are enriched in basic and acidic residues. Residue Lys189 forms a Glycyl lysine isopeptide (Lys-Gly) (interchain with G-Cter in SUMO2) linkage. The region spanning 200 to 345 (ETSRLFVKKT…EDCIYPQSSE (146 aa)) is the YEATS domain. 2 histone H3K27cr binding regions span residues 259–261 (HPS) and 282–284 (WGE). Lys370 participates in a covalent cross-link: Glycyl lysine isopeptide (Lys-Gly) (interchain with G-Cter in SUMO2). Thr407 is subject to Phosphothreonine. Phosphoserine is present on residues Ser447, Ser463, Ser465, Ser471, and Ser473. The disordered stretch occupies residues 465–486 (SPISTPSPSPLPRTPTSTPVHV). Thr478 is subject to Phosphothreonine. Residue Lys487 forms a Glycyl lysine isopeptide (Lys-Gly) (interchain with G-Cter in SUMO2) linkage. Positions 513–535 (TTPSTGSPTNKISTASQVSQGTG) are enriched in polar residues. Residues 513–540 (TTPSTGSPTNKISTASQVSQGTGSPVPK) form a disordered region. The residue at position 536 (Ser536) is a Phosphoserine. Lys552 is covalently cross-linked (Glycyl lysine isopeptide (Lys-Gly) (interchain with G-Cter in SUMO2)). A Phosphoserine modification is found at Ser575. A Glycyl lysine isopeptide (Lys-Gly) (interchain with G-Cter in SUMO2) cross-link involves residue Lys592. Phosphoserine is present on Ser627. Glycyl lysine isopeptide (Lys-Gly) (interchain with G-Cter in SUMO2) cross-links involve residues Lys649 and Lys773. A disordered region spans residues 794-842 (GSAASGGSGAGGGGGGGGGGGSGSGGGGSTGGGGGTAGGGTQSTAGPGG). The segment covering 797-842 (ASGGSGAGGGGGGGGGGGSGSGGGGSTGGGGGTAGGGTQSTAGPGG) has biased composition (gly residues). Residue Lys923 forms a Glycyl lysine isopeptide (Lys-Gly) (interchain with G-Cter in SUMO2) linkage. Lys1110 is covalently cross-linked (Glycyl lysine isopeptide (Lys-Gly) (interchain with G-Cter in SUMO1); alternate). Residue Lys1110 forms a Glycyl lysine isopeptide (Lys-Gly) (interchain with G-Cter in SUMO2); alternate linkage. Residue Lys1130 forms a Glycyl lysine isopeptide (Lys-Gly) (interchain with G-Cter in SUMO2) linkage. Thr1219 carries the post-translational modification Phosphothreonine. Residues Lys1222 and Lys1285 each participate in a glycyl lysine isopeptide (Lys-Gly) (interchain with G-Cter in SUMO2) cross-link.

Component of the ADA2A-containing complex (ATAC), composed of KAT14, KAT2A, TADA2L, TADA3L, ZZ3, MBIP, WDR5, YEATS2, SGF29 and DR1.

The protein resides in the nucleus. In terms of biological role, chromatin reader component of the ATAC complex, a complex with histone acetyltransferase activity on histones H3 and H4. YEATS2 specifically recognizes and binds histone H3 crotonylated at 'Lys-27' (H3K27cr). Crotonylation marks active promoters and enhancers and confers resistance to transcriptional repressors. The polypeptide is YEATS domain-containing protein 2 (Homo sapiens (Human)).